A 274-amino-acid chain; its full sequence is MAASRLALLLLVLAVAAARHALPAAGSDAHPGYDGAEDTCGVPAAAAAAGRMEEYGGGRILDITHAYRADLPAFAPGAVTGPVVRLRDSMANGTLYNLSELKMECHMGTHVDAPGHMNQGHFAAGLDVDKLDLDLLNGPTLLVDTPRNTNITAKAMESLNIPKGVRRVLFRTLNTDRKLMWKKGGDLSYVGFTEDGAQWLVDNTDIKLVGIDYLSVAAYDHLITAHVVFFKFPNIILVEGLKLDDVKAGIYMLHCLPLRLVGSEGSPIRCILIK.

The first 18 residues, 1–18 (MAASRLALLLLVLAVAAA), serve as a signal peptide directing secretion.

It belongs to the Cyclase 1 superfamily. Highly expressed in leaf sheaths. Expressed in leaf collars.

Its subcellular location is the secreted. It localises to the extracellular space. The protein resides in the extracellular matrix. Functionally, may be involved in response to stresses. This chain is Cyclase-like protein 1, found in Oryza sativa subsp. japonica (Rice).